Consider the following 154-residue polypeptide: MSLIPRIFGDRRSSSMFDPFSIDVFDPFRELGFPSTNSGESSAFANTRIDWKETPEPHVFKVDLPGLKKEEVKVEVEEDRVLQISGERNVEKEDKNDKWHRMERSSGKFMRRFRLPENAKMDQVKASMENGVLTVTVPKEEVKKPEVKSIEISG.

One can recognise a sHSP domain in the interval 40–154; the sequence is ESSAFANTRI…PEVKSIEISG (115 aa).

This sequence belongs to the small heat shock protein (HSP20) family. Forms oligomeric structures.

It is found in the cytoplasm. The protein is 17.8 kDa class I heat shock protein of Solanum lycopersicum (Tomato).